A 312-amino-acid chain; its full sequence is Acetaldehyde dehydrogenase 4 (312 aa).

12–15 is an NAD(+) binding site; sequence SGNI. The Acyl-thioester intermediate role is filled by Cys-132. NAD(+) is bound by residues 163–171 and Asn-290; that span reads SAGPGTRAN.

It belongs to the acetaldehyde dehydrogenase family.

It catalyses the reaction acetaldehyde + NAD(+) + CoA = acetyl-CoA + NADH + H(+). The protein is Acetaldehyde dehydrogenase 4 of Azotobacter vinelandii (strain DJ / ATCC BAA-1303).